Consider the following 195-residue polypeptide: ATP-dependent Clp protease proteolytic subunit 2 (195 aa).

Residue S95 is the Nucleophile of the active site. H120 is an active-site residue.

Belongs to the peptidase S14 family. As to quaternary structure, fourteen ClpP subunits assemble into 2 heptameric rings which stack back to back to give a disk-like structure with a central cavity, resembling the structure of eukaryotic proteasomes.

The protein localises to the cytoplasm. The enzyme catalyses Hydrolysis of proteins to small peptides in the presence of ATP and magnesium. alpha-casein is the usual test substrate. In the absence of ATP, only oligopeptides shorter than five residues are hydrolyzed (such as succinyl-Leu-Tyr-|-NHMec, and Leu-Tyr-Leu-|-Tyr-Trp, in which cleavage of the -Tyr-|-Leu- and -Tyr-|-Trp bonds also occurs).. Cleaves peptides in various proteins in a process that requires ATP hydrolysis. Has a chymotrypsin-like activity. Plays a major role in the degradation of misfolded proteins. The polypeptide is ATP-dependent Clp protease proteolytic subunit 2 (Methylococcus capsulatus (strain ATCC 33009 / NCIMB 11132 / Bath)).